Reading from the N-terminus, the 308-residue chain is MRPEGSLTYRVPERLRQGFCGVGRAAQALVCASAKEGTAFRMEAVQEGAAGVESEQAALGEEAVLLLDDIMAEVEVVAEEEGLVERREEAQRAQQAVPGPGPMTPESAPEELLAVQVELEPVNAQARKAFSRQREKMERRRKPHLDRRGAVIQSVPGFWANVIANHPQMSALITDEDEDMLSYMVSLEVGEEKHPVHLCKIMLFFRSNPYFQNKVITKEYLVNITEYRASHSTPIEWYPDYEVEAYRRRHHNSSLNFFNWFSDHNFAGSNKIAEILCKDLWRNPLQYYKRMKPPEEGTETSGDSQLLS.

Belongs to the nucleosome assembly protein (NAP) family. Phosphorylated. As to expression, specifically expressed in testicular tissues. Isoform 1 and isoform 2 are expressed in spermatogonia and spermatocytes. Found in early testicular carcinoma in situ, spermatogonial cells in testicular tissues of 46,X,Y female and in prostate cancer cell lines.

It is found in the cytoplasm. The protein resides in the nucleus. May be involved in sperm differentiation and proliferation. This Homo sapiens (Human) protein is Testis-specific Y-encoded protein 1 (TSPY1).